Consider the following 959-residue polypeptide: Protovillin (959 aa).

Residues 1–53 form a tail region; that stretch reads MEPPLELPTQRKRVIPSKFGILKRNAEIEAEKNRENLQQSSCFSHINEIGKEI. A core region spans residues 54–832; that stretch reads GLEIWKIIDD…PIMLPTSGVT (779 aa). 6 Gelsolin-like repeats span residues 64–116, 204–244, 309–366, 479–529, 603–647, and 713–754; these read STIQ…SQET, IRVK…LEKG, IKLY…DQRT, RNKF…EDKG, INIH…KEAA, and FKVF…TEKL. 2 consecutive repeat copies span residues 840 to 849 and 851 to 860. Positions 840–860 are 2 X 10 AA repeats of T-P-K-P-I-T-T-P-T-V; it reads TPKPITTPTVTTPKPITTPTV. Residues 895 to 959 form the HP domain; sequence TTITTFYPLS…KQLRVDNGLF (65 aa).

It belongs to the villin/gelsolin family.

The protein localises to the cytoplasm. It localises to the cytoskeleton. Its function is as follows. Caps actin filaments but displays neither severing nor cross-linking nor nucleating activities. Protovillin seems to be a villin precursor with only archaic capping activity. It lacks essential changes in the sequence to allow bundling of actin filaments and consequently the appearance of microvilli. The protein is Protovillin (vilB) of Dictyostelium discoideum (Social amoeba).